The chain runs to 358 residues: S-adenosylmethionine decarboxylase proenzyme (358 aa).

Residues E11 and E14 contribute to the active site. Catalysis depends on S71, which acts as the Schiff-base intermediate with substrate; via pyruvic acid. At S71 the chain carries Pyruvic acid (Ser); by autocatalysis. The active-site Proton donor; for catalytic activity is C85. Catalysis depends on proton acceptor; for processing activity residues S234 and H247.

Belongs to the eukaryotic AdoMetDC family. It depends on pyruvate as a cofactor. Is synthesized initially as an inactive proenzyme. Formation of the active enzyme involves a self-maturation process in which the active site pyruvoyl group is generated from an internal serine residue via an autocatalytic post-translational modification. Two non-identical subunits are generated from the proenzyme in this reaction, and the pyruvate is formed at the N-terminus of the alpha chain, which is derived from the carboxyl end of the proenzyme. The post-translation cleavage follows an unusual pathway, termed non-hydrolytic serinolysis, in which the side chain hydroxyl group of the serine supplies its oxygen atom to form the C-terminus of the beta chain, while the remainder of the serine residue undergoes an oxidative deamination to produce ammonia and the pyruvoyl group blocking the N-terminus of the alpha chain.

The enzyme catalyses S-adenosyl-L-methionine + H(+) = S-adenosyl 3-(methylsulfanyl)propylamine + CO2. It functions in the pathway amine and polyamine biosynthesis; S-adenosylmethioninamine biosynthesis; S-adenosylmethioninamine from S-adenosyl-L-methionine: step 1/1. This is S-adenosylmethionine decarboxylase proenzyme (SAMDC) from Solanum chilense (Tomato).